We begin with the raw amino-acid sequence, 259 residues long: NADP-dependent 3-hydroxy acid dehydrogenase (259 aa).

Isoleucine 11 is a binding site for NADP(+). Serine 42 is subject to Phosphoserine. Position 43 is a phosphothreonine (threonine 43). Residues aspartate 65, asparagine 92, arginine 126, tyrosine 158, lysine 162, and valine 191 each contribute to the NADP(+) site. The active-site Proton acceptor is the tyrosine 158. Lysine 162 functions as the Lowers pKa of active site Tyr in the catalytic mechanism.

Belongs to the short-chain dehydrogenases/reductases (SDR) family. As to quaternary structure, homotetramer.

Its subcellular location is the cytoplasm. The protein localises to the nucleus. The enzyme catalyses L-allo-threonine + NADP(+) = aminoacetone + CO2 + NADPH. Functionally, NADP-dependent dehydrogenase with broad substrate specificity acting on 3-hydroxy acids. Catalyzes the NADP-dependent oxidation of L-allo-threonine to L-2-amino-3-keto-butyrate, which is spontaneously decarboxylated into aminoacetone. Also acts on D-threonine, L-serine, D-serine, D-3-hydroxyisobutyrate, L-3-hydroxyisobutyrate, D-glycerate and L-glycerate. The chain is NADP-dependent 3-hydroxy acid dehydrogenase from Schizosaccharomyces pombe (strain 972 / ATCC 24843) (Fission yeast).